Consider the following 638-residue polypeptide: Cell division control protein 45 homolog (638 aa).

The segment at 151–204 (ELSDEENSDSSNEREEEVEDDNRSVESYSSSDYQARSRRRFSEETTQRRAEIKE) is disordered. Residues 153–170 (SDEENSDSSNEREEEVED) show a composition bias toward acidic residues. Positions 190–204 (RFSEETTQRRAEIKE) are enriched in basic and acidic residues.

Belongs to the CDC45 family. In terms of assembly, interacts with sld3.

Its subcellular location is the nucleus. Its function is as follows. Required for initiation of chromosomal DNA replication. May have a role in regulating the MCM proteins nda1 and nda4. The sequence is that of Cell division control protein 45 homolog (sna41) from Schizosaccharomyces pombe (strain 972 / ATCC 24843) (Fission yeast).